A 379-amino-acid chain; its full sequence is 8-amino-7-oxononanoate synthase (379 aa).

Residues Arg-27 and Arg-34 each contribute to the substrate site. A pyridoxal 5'-phosphate-binding site is contributed by 114–115; the sequence is GY. His-139 lines the substrate pocket. Residues Ser-187, 212 to 215, and 232 to 235 contribute to the pyridoxal 5'-phosphate site; these read DDAH and TLSK. Lys-235 bears the N6-(pyridoxal phosphate)lysine mark. Thr-344 contributes to the substrate binding site.

It belongs to the class-II pyridoxal-phosphate-dependent aminotransferase family. BioF subfamily. As to quaternary structure, homodimer. Pyridoxal 5'-phosphate is required as a cofactor.

The catalysed reaction is 6-carboxyhexanoyl-[ACP] + L-alanine + H(+) = (8S)-8-amino-7-oxononanoate + holo-[ACP] + CO2. It functions in the pathway cofactor biosynthesis; biotin biosynthesis. Its function is as follows. Catalyzes the decarboxylative condensation of pimeloyl-[acyl-carrier protein] and L-alanine to produce 8-amino-7-oxononanoate (AON), [acyl-carrier protein], and carbon dioxide. This chain is 8-amino-7-oxononanoate synthase, found in Methylobacterium nodulans (strain LMG 21967 / CNCM I-2342 / ORS 2060).